The sequence spans 199 residues: Segregation and condensation protein B (199 aa).

Belongs to the ScpB family. Homodimer. Homodimerization may be required to stabilize the binding of ScpA to the Smc head domains. Component of a cohesin-like complex composed of ScpA, ScpB and the Smc homodimer, in which ScpA and ScpB bind to the head domain of Smc. The presence of the three proteins is required for the association of the complex with DNA.

The protein resides in the cytoplasm. Its function is as follows. Participates in chromosomal partition during cell division. May act via the formation of a condensin-like complex containing Smc and ScpA that pull DNA away from mid-cell into both cell halves. The sequence is that of Segregation and condensation protein B from Leuconostoc mesenteroides subsp. mesenteroides (strain ATCC 8293 / DSM 20343 / BCRC 11652 / CCM 1803 / JCM 6124 / NCDO 523 / NBRC 100496 / NCIMB 8023 / NCTC 12954 / NRRL B-1118 / 37Y).